We begin with the raw amino-acid sequence, 324 residues long: Phosphate transport system permease protein PstC 2 (324 aa).

Helical transmembrane passes span A30–V50, L90–L110, M125–L145, A174–V194, V237–I257, and P290–V310. One can recognise an ABC transmembrane type-1 domain in the interval F85 to A314.

It belongs to the binding-protein-dependent transport system permease family. CysTW subfamily.

It localises to the cell membrane. Part of the binding-protein-dependent transport system for phosphate; probably responsible for the translocation of the substrate across the membrane. This Mycobacterium bovis (strain ATCC BAA-935 / AF2122/97) protein is Phosphate transport system permease protein PstC 2 (pstC2).